The following is a 1262-amino-acid chain: Clustered mitochondria protein homolog (1262 aa).

Residues 1–47 (MTSGSELKAEVDAPVVNGKDELVHEEDNNDSGHSSINTPDASEDKQT) form a disordered region. Polar residues predominate over residues 31–40 (SGHSSINTPD). In terms of domain architecture, Clu spans 335–580 (AIELIEPFRV…RSMPPDVHYL (246 aa)).

This sequence belongs to the CLU family.

It localises to the cytoplasm. MRNA-binding protein involved in proper cytoplasmic distribution of mitochondria. The protein is Clustered mitochondria protein homolog of Caenorhabditis briggsae.